Reading from the N-terminus, the 489-residue chain is Putative general secretion pathway protein A (489 aa).

26–33 (GEAGSGKT) is a binding site for ATP. A helical transmembrane segment spans residues 237 to 257 (MQLAVVMSGTIIALTCGWLLL).

Belongs to the ExeA family.

It localises to the cell membrane. Functionally, may play a regulatory role under conditions of derepressed gsp gene expression. The chain is Putative general secretion pathway protein A (gspA) from Escherichia coli (strain K12).